The sequence spans 463 residues: Retinoic acid receptor RXR-gamma (463 aa).

Positions 1–138 are modulating; sequence MYGNYSHFMK…TSPGSLVKHI (138 aa). Residues 17-53 form a disordered region; that stretch reads GSPGHSGSTSMSPSAALSTGKPMDSHPSYTDTPVSAP. Over residues 21 to 33 the composition is skewed to polar residues; that stretch reads HSGSTSMSPSAAL. NR C4-type zinc fingers lie at residues 139–159 and 175–199; these read CAICGDRSSGKHYGVYSCEGC and CRDNKDCLIDKRQRNRCQYCRYQKC. Positions 139 to 204 form a DNA-binding region, nuclear receptor; that stretch reads CAICGDRSSG…RYQKCLVMGM (66 aa). Residues 205 to 230 form a hinge region; it reads KREAVQEERQRSRERAESEAECASSG. The span at 211–222 shows a compositional bias: basic and acidic residues; the sequence is EERQRSRERAES. The segment at 211-232 is disordered; the sequence is EERQRSRERAESEAECASSGHE. The 229-residue stretch at 231 to 459 folds into the NR LBD domain; it reads HEDMPVERIL…TFLMEMLETP (229 aa).

It belongs to the nuclear hormone receptor family. NR2 subfamily. As to quaternary structure, homodimer. Heterodimer with a RAR molecule. Binds DNA preferentially as a RAR/RXR heterodimer. Interacts with RARA. In terms of processing, acetylated by EP300.

The protein resides in the nucleus. It localises to the cytoplasm. Its function is as follows. Receptor for retinoic acid. Retinoic acid receptors bind as heterodimers to their target response elements in response to their ligands, all-trans or 9-cis retinoic acid, and regulate gene expression in various biological processes. The RAR/RXR heterodimers bind to the retinoic acid response elements (RARE) composed of tandem 5'-AGGTCA-3' sites known as DR1-DR5. The high affinity ligand for RXRs is 9-cis retinoic acid. In Sus scrofa (Pig), this protein is Retinoic acid receptor RXR-gamma (RXRG).